A 643-amino-acid chain; its full sequence is MGGGGMKKIVLALLLLLLPVVCGDVSVYKVWSPYDPPNSPILHVDISEQVLYLGVVNKDEYEHDVIVKVECNGKTWGSGLIPLPPNSHIEKIVEVRVPISDDKEHDAKISLIENGKTIASTTVKVRPYFPVDVKNVTCEDSYKIGNTEVCYSNWFDITLKSNPTAKSDYIAKVWINVKDGDNIIYNGKNDFKTVYIPLGEEVTVSFKVPKIVLDKEKFTVETNVEIMNVTHTIDGVEETIQRRDDSGIYYDYKSVTKYYYFPVVIKNVELYRKIDENTSEFVKNFYDSANILDDEIRDILSDKYLQKDDVLPRYYVIDDPTLAILKITVENKYDRDVKAKLTVKYDNVIFTKIINIDKKEKKDVFIPIYTKKGSKNIVVTINPIDADTLIFNRSYSINIDPKPIPPVIIEKIILPKDEEIGEETNISGYVIIGKRYNMTIFIKNIYNKTLSGKITIDDNFKDGIANYSKEIPFTIEPHQIKEINVPIIFYKEVNGDLKITVSVKGGAKDYTSLAHFYAISPIGIVRIYYNNTLLLGKINVIKENSGIYSAKPIAGFNNTCVVILRNNLNSKVDCDVWIEVIDKDGKVRAKSGIKTVKLDNYSEAKVAFPIFFEEGFEGYTVAHIIPKSVENVDIIYTEVMEST.

The chain crosses the membrane as a helical span at residues 9–29; it reads IVLALLLLLLPVVCGDVSVYK.

It localises to the membrane. This is an uncharacterized protein from Methanocaldococcus jannaschii (strain ATCC 43067 / DSM 2661 / JAL-1 / JCM 10045 / NBRC 100440) (Methanococcus jannaschii).